A 215-amino-acid polypeptide reads, in one-letter code: Probable phosphoglycerate mutase GpmB (215 aa).

Residues 8–15 (RHGETQWN), 21–22 (QG), Arg-58, Arg-60, 82–85 (ELNM), 104–105 (RR), and 151–152 (GI) contribute to the substrate site. His-9 functions as the Tele-phosphohistidine intermediate in the catalytic mechanism. Residue Glu-82 is the Proton donor/acceptor of the active site.

It belongs to the phosphoglycerate mutase family. GpmB subfamily.

The catalysed reaction is (2R)-2-phosphoglycerate = (2R)-3-phosphoglycerate. It functions in the pathway carbohydrate degradation; glycolysis; pyruvate from D-glyceraldehyde 3-phosphate: step 3/5. The polypeptide is Probable phosphoglycerate mutase GpmB (Escherichia fergusonii (strain ATCC 35469 / DSM 13698 / CCUG 18766 / IAM 14443 / JCM 21226 / LMG 7866 / NBRC 102419 / NCTC 12128 / CDC 0568-73)).